Consider the following 562-residue polypeptide: Arginine--tRNA ligase (562 aa).

The short motif at 129-139 is the 'HIGH' region element; it reads ANPTGPLHVGH.

This sequence belongs to the class-I aminoacyl-tRNA synthetase family. As to quaternary structure, monomer.

It localises to the cytoplasm. The catalysed reaction is tRNA(Arg) + L-arginine + ATP = L-arginyl-tRNA(Arg) + AMP + diphosphate. This chain is Arginine--tRNA ligase, found in Xylella fastidiosa (strain M23).